The chain runs to 236 residues: UPF0257 lipoprotein YnfC (236 aa).

Positions 1–16 (MKYKLLPCLLAILLTG) are cleaved as a signal peptide. C17 carries the N-palmitoyl cysteine lipid modification. A lipid anchor (S-diacylglycerol cysteine) is attached at C17.

Belongs to the UPF0257 family.

Its subcellular location is the cell membrane. The polypeptide is UPF0257 lipoprotein YnfC (Escherichia coli O157:H7).